A 309-amino-acid polypeptide reads, in one-letter code: Homoserine kinase (309 aa).

91–101 is an ATP binding site; the sequence is PIGSGLGSSAC.

This sequence belongs to the GHMP kinase family. Homoserine kinase subfamily.

It is found in the cytoplasm. The catalysed reaction is L-homoserine + ATP = O-phospho-L-homoserine + ADP + H(+). It participates in amino-acid biosynthesis; L-threonine biosynthesis; L-threonine from L-aspartate: step 4/5. In terms of biological role, catalyzes the ATP-dependent phosphorylation of L-homoserine to L-homoserine phosphate. The sequence is that of Homoserine kinase from Edwardsiella ictaluri (strain 93-146).